A 101-amino-acid chain; its full sequence is Cell division protein FtsB (101 aa).

The Cytoplasmic portion of the chain corresponds to 1 to 3; sequence MRI. The chain crosses the membrane as a helical span at residues 4–21; the sequence is VIYSMLVLLIAIQYPLWL. The Periplasmic portion of the chain corresponds to 22 to 101; the sequence is GKGGWLKVYE…KSSDTQVTKQ (80 aa). Positions 33-53 form a coiled coil; that stretch reads ERQVELQEAKNSLLALRNAKL.

Belongs to the FtsB family. In terms of assembly, part of a complex composed of FtsB, FtsL and FtsQ.

It is found in the cell inner membrane. Essential cell division protein. May link together the upstream cell division proteins, which are predominantly cytoplasmic, with the downstream cell division proteins, which are predominantly periplasmic. The polypeptide is Cell division protein FtsB (Polynucleobacter necessarius subsp. necessarius (strain STIR1)).